The sequence spans 256 residues: DNA repair protein RecO (256 aa).

Belongs to the RecO family.

Involved in DNA repair and RecF pathway recombination. This is DNA repair protein RecO from Streptococcus pneumoniae (strain Hungary19A-6).